We begin with the raw amino-acid sequence, 246 residues long: Sec-independent protein translocase protein TatB (246 aa).

The chain crosses the membrane as a helical span at residues 1-21 (MFDIGWSELLVIAVVLIVVVG). 3 disordered regions span residues 94–122 (SDLQ…APLV), 179–204 (SRSK…PKPT), and 225–246 (VADA…KDEA). Polar residues-rich tracts occupy residues 97-112 (QKAT…TAAP) and 187-197 (PETTVATNASE).

It belongs to the TatB family. As to quaternary structure, the Tat system comprises two distinct complexes: a TatABC complex, containing multiple copies of TatA, TatB and TatC subunits, and a separate TatA complex, containing only TatA subunits. Substrates initially bind to the TatABC complex, which probably triggers association of the separate TatA complex to form the active translocon.

The protein resides in the cell inner membrane. Functionally, part of the twin-arginine translocation (Tat) system that transports large folded proteins containing a characteristic twin-arginine motif in their signal peptide across membranes. Together with TatC, TatB is part of a receptor directly interacting with Tat signal peptides. TatB may form an oligomeric binding site that transiently accommodates folded Tat precursor proteins before their translocation. The chain is Sec-independent protein translocase protein TatB from Agrobacterium fabrum (strain C58 / ATCC 33970) (Agrobacterium tumefaciens (strain C58)).